We begin with the raw amino-acid sequence, 353 residues long: Methylthioribose-1-phosphate isomerase (353 aa).

Substrate-binding positions include Arg48–Ala50, Arg94, and Gln201. The active-site Proton donor is Asp242. A substrate-binding site is contributed by Asn252–Lys253.

Belongs to the eIF-2B alpha/beta/delta subunits family. MtnA subfamily.

The catalysed reaction is 5-(methylsulfanyl)-alpha-D-ribose 1-phosphate = 5-(methylsulfanyl)-D-ribulose 1-phosphate. It participates in amino-acid biosynthesis; L-methionine biosynthesis via salvage pathway; L-methionine from S-methyl-5-thio-alpha-D-ribose 1-phosphate: step 1/6. In terms of biological role, catalyzes the interconversion of methylthioribose-1-phosphate (MTR-1-P) into methylthioribulose-1-phosphate (MTRu-1-P). The sequence is that of Methylthioribose-1-phosphate isomerase from Roseiflexus sp. (strain RS-1).